Reading from the N-terminus, the 119-residue chain is Holo-[acyl-carrier-protein] synthase (119 aa).

Residues aspartate 5 and glutamate 51 each coordinate Mg(2+).

The protein belongs to the P-Pant transferase superfamily. AcpS family. Requires Mg(2+) as cofactor.

The protein resides in the cytoplasm. It carries out the reaction apo-[ACP] + CoA = holo-[ACP] + adenosine 3',5'-bisphosphate + H(+). In terms of biological role, transfers the 4'-phosphopantetheine moiety from coenzyme A to a Ser of acyl-carrier-protein. The chain is Holo-[acyl-carrier-protein] synthase from Helicobacter pylori (strain J99 / ATCC 700824) (Campylobacter pylori J99).